A 568-amino-acid chain; its full sequence is Urease subunit alpha (568 aa).

The Urease domain occupies 133-568; that stretch reads GGLDIHIHFN…ELPLAQRYLL (436 aa). Histidine 138, histidine 140, and lysine 217 together coordinate Ni(2+). Lysine 217 bears the N6-carboxylysine mark. Histidine 219 contributes to the substrate binding site. Histidine 246 and histidine 272 together coordinate Ni(2+). Histidine 320 serves as the catalytic Proton donor. Aspartate 360 lines the Ni(2+) pocket.

The protein belongs to the metallo-dependent hydrolases superfamily. Urease alpha subunit family. As to quaternary structure, heterotrimer of UreA (gamma), UreB (beta) and UreC (alpha) subunits. Three heterotrimers associate to form the active enzyme. It depends on Ni cation as a cofactor. Post-translationally, carboxylation allows a single lysine to coordinate two nickel ions.

The protein localises to the cytoplasm. The enzyme catalyses urea + 2 H2O + H(+) = hydrogencarbonate + 2 NH4(+). It participates in nitrogen metabolism; urea degradation; CO(2) and NH(3) from urea (urease route): step 1/1. The polypeptide is Urease subunit alpha (Haloarcula marismortui (strain ATCC 43049 / DSM 3752 / JCM 8966 / VKM B-1809) (Halobacterium marismortui)).